The primary structure comprises 897 residues: DNA polymerase I (897 aa).

Positions 1 to 317 (MEQPVIKEGT…ILDNTPALDN (317 aa)) constitute a 5'-3' exonuclease domain. The region spanning 318-494 (APKKSRMIVL…RLCEYFEKGG (177 aa)) is the 3'-5' exonuclease domain. Positions 498-896 (DLLTLARDIE…FIAKRWNELK (399 aa)) are polymerase.

This sequence belongs to the DNA polymerase type-A family. Single-chain monomer with multiple functions.

The enzyme catalyses DNA(n) + a 2'-deoxyribonucleoside 5'-triphosphate = DNA(n+1) + diphosphate. In terms of biological role, in addition to polymerase activity, this DNA polymerase exhibits 3'-5' and 5'-3' exonuclease activity. This is DNA polymerase I (polA) from Helicobacter pylori (strain J99 / ATCC 700824) (Campylobacter pylori J99).